The following is a 250-amino-acid chain: 2,3-bisphosphoglycerate-dependent phosphoglycerate mutase (250 aa).

Residues 10–17 (RHGESQWN), 23–24 (TG), Arg62, 89–92 (ERHY), Lys100, 116–117 (RR), and 185–186 (GN) contribute to the substrate site. The active-site Tele-phosphohistidine intermediate is the His11. Glu89 acts as the Proton donor/acceptor in catalysis.

Belongs to the phosphoglycerate mutase family. BPG-dependent PGAM subfamily. Homodimer.

The enzyme catalyses (2R)-2-phosphoglycerate = (2R)-3-phosphoglycerate. It participates in carbohydrate degradation; glycolysis; pyruvate from D-glyceraldehyde 3-phosphate: step 3/5. Functionally, catalyzes the interconversion of 2-phosphoglycerate and 3-phosphoglycerate. The sequence is that of 2,3-bisphosphoglycerate-dependent phosphoglycerate mutase from Pectobacterium carotovorum subsp. carotovorum (strain PC1).